The chain runs to 545 residues: Glucose starvation modulator protein 1 (545 aa).

A DNA-binding region (zn(2)-C6 fungal-type) is located at residues 20–48 (CGFCHEKHLQCDVGRPCQNCRKRNIASFC). The span at 51 to 60 (KVKRRRKRKR) shows a compositional bias: basic residues. Disordered regions lie at residues 51 to 131 (KVKR…AMKD) and 228 to 270 (YISL…WQQQ). A compositionally biased stretch (basic and acidic residues) spans 61–71 (SDASNFDKDEA). Positions 72 to 92 (ATQTLNFNTVNPGEGSSSAMT) are enriched in polar residues. Low complexity predominate over residues 98 to 110 (TGTTTATTTRTTT). Residues 111 to 125 (NFRSESKASSSTENI) show a composition bias toward polar residues. Low complexity predominate over residues 257–270 (QQKESQQMQLWQQQ). The 71-residue stretch at 416–486 (ELENMSKLVN…DLFHEHLAFG (71 aa)) folds into the PAS domain.

This sequence belongs to the ERT1/acuK family.

The protein localises to the nucleus. Transcription factor which regulates nonfermentable carbon utilization. This chain is Glucose starvation modulator protein 1 (GSM1), found in Zygosaccharomyces rouxii (strain ATCC 2623 / CBS 732 / NBRC 1130 / NCYC 568 / NRRL Y-229).